A 218-amino-acid chain; its full sequence is Protein-L-isoaspartate O-methyltransferase (218 aa).

Residue Ser60 is part of the active site.

The protein belongs to the methyltransferase superfamily. L-isoaspartyl/D-aspartyl protein methyltransferase family.

Its subcellular location is the cytoplasm. It carries out the reaction [protein]-L-isoaspartate + S-adenosyl-L-methionine = [protein]-L-isoaspartate alpha-methyl ester + S-adenosyl-L-homocysteine. Its function is as follows. Catalyzes the methyl esterification of L-isoaspartyl residues in peptides and proteins that result from spontaneous decomposition of normal L-aspartyl and L-asparaginyl residues. It plays a role in the repair and/or degradation of damaged proteins. This is Protein-L-isoaspartate O-methyltransferase from Roseiflexus castenholzii (strain DSM 13941 / HLO8).